Consider the following 299-residue polypeptide: Foldase protein PrsA (299 aa).

The first 19 residues, 1–19 (MKKWTIAASLSIGVLALSA), serve as a signal peptide directing secretion. Cys-20 carries N-palmitoyl cysteine lipidation. The S-diacylglycerol cysteine moiety is linked to residue Cys-20. The region spanning 137 to 227 (NTEIQAQHIL…HGTHIIKVND (91 aa)) is the PpiC domain.

This sequence belongs to the PrsA family.

It is found in the cell membrane. The enzyme catalyses [protein]-peptidylproline (omega=180) = [protein]-peptidylproline (omega=0). Functionally, plays a major role in protein secretion by helping the post-translocational extracellular folding of several secreted proteins. The polypeptide is Foldase protein PrsA (Oceanobacillus iheyensis (strain DSM 14371 / CIP 107618 / JCM 11309 / KCTC 3954 / HTE831)).